Reading from the N-terminus, the 458-residue chain is Protein adenylyltransferase FICD (458 aa).

The Cytoplasmic portion of the chain corresponds to 1–23 (MMLIPMASVMAVTEPKWVSVWSR). A helical; Signal-anchor for type II membrane protein membrane pass occupies residues 24 to 44 (FLWVTLLSMVLGSLLALLLPL). Over 45 to 458 (GAVEEQCLAV…GFKETLPVKP (414 aa)) the chain is Lumenal. O-AMP-serine; by autocatalysis is present on Ser-79. Thr-80 is subject to O-AMP-threonine; by autocatalysis. 2 TPR repeats span residues 106–139 (ARAA…DPDF) and 140–173 (VDAL…SPYH). An O-AMP-threonine; by autocatalysis modification is found at Thr-183. Positions 230-235 (TVAIEG) match the Inhibitory (S/T)XXXE(G/N) motif motif. Glu-234 serves as a coordination point for ATP. An N-linked (GlcNAc...) asparagine glycan is attached at Asn-275. Residues 285 to 420 (VTISDVLEIH…VRPFIRFIAK (136 aa)) form the Fido domain. 316-319 (VGHH) contacts ATP. His-363 is a catalytic residue. ATP-binding positions include 367 to 374 (DGNGRTSR), 399 to 400 (YY), and Asn-407. Residue Asn-446 is glycosylated (N-linked (GlcNAc...) asparagine).

The protein belongs to the fic family. As to quaternary structure, homodimer. Interacts with HD. The cofactor is Mg(2+). It depends on Mn(2+) as a cofactor. Post-translationally, auto-AMPylated in vitro; it is unclear whether auto-AMPylation is relevant in vivo. N-glycosylated; predominantly glycosylated at Asn-275. In terms of tissue distribution, ubiquitous.

The protein resides in the endoplasmic reticulum membrane. It carries out the reaction L-tyrosyl-[protein] + ATP = O-(5'-adenylyl)-L-tyrosyl-[protein] + diphosphate. The enzyme catalyses 3-O-(5'-adenylyl)-L-threonyl-[protein] + H2O = L-threonyl-[protein] + AMP + H(+). It catalyses the reaction L-threonyl-[protein] + ATP = 3-O-(5'-adenylyl)-L-threonyl-[protein] + diphosphate. With respect to regulation, the side chain of Glu-234 determines which of the two opposing activities (AMPylase or de-AMPylase) will take place. In response to endoplasmic reticulum stress, mediates de-AMPylase activity. Adenylyltransferase activity is inhibited by the inhibitory helix present at the N-terminus: Glu-234 binds ATP and competes with ATP-binding at Arg-374, thereby preventing adenylyltransferase activity. In unstressed cells, disengagement of Glu-234 promotes adenylyltransferase activity. Activation dissociates ATP-binding from Glu-234, allowing ordered binding of the entire ATP moiety with the alpha-phosphate in an orientation that is productive for accepting an incoming target hydroxyl side chain. Functionally, protein that can both mediate the addition of adenosine 5'-monophosphate (AMP) to specific residues of target proteins (AMPylation), and the removal of the same modification from target proteins (de-AMPylation), depending on the context. The side chain of Glu-231 determines which of the two opposing activities (AMPylase or de-AMPylase) will take place. Acts as a key regulator of the ERN1/IRE1-mediated unfolded protein response (UPR) by mediating AMPylation or de-AMPylation of HSPA5/BiP. In unstressed cells, acts as an adenylyltransferase by mediating AMPylation of HSPA5/BiP at 'Thr-518', thereby inactivating it. In response to endoplasmic reticulum stress, acts as a phosphodiesterase by mediating removal of ATP (de-AMPylation) from HSPA5/BiP at 'Thr-518', leading to restore HSPA5/BiP activity. Although it is able to AMPylate RhoA, Rac and Cdc42 Rho GTPases in vitro, Rho GTPases do not constitute physiological substrates. This is Protein adenylyltransferase FICD from Homo sapiens (Human).